The primary structure comprises 280 residues: Delta(3,5)-Delta(2,4)-dienoyl-CoA isomerase (280 aa).

Catalysis depends on Glu-154, which acts as the Proton donor/acceptor. A Peroxisome targeting signal (PTS1) motif is present at residues 278–280 (HKL).

The protein belongs to the enoyl-CoA hydratase/isomerase family.

It localises to the cytoplasm. Its subcellular location is the cytosol. The protein resides in the peroxisome. It catalyses the reaction a (3E,5Z)-dienoyl-CoA = a (2E,4E)-(5,6-saturated)-dienoyl-CoA. It participates in lipid metabolism; fatty acid beta-oxidation. In terms of biological role, peroxisomal di-isomerase that is involved in fatty acid metabolism enzyme by converting 3,5-dienoyl-CoAs to the corresponding 2,4-dienoyl-CoAs. Involved in fatty acid beta-oxidation, which is important for lipid droplets degradation and infectious growth. The sequence is that of Delta(3,5)-Delta(2,4)-dienoyl-CoA isomerase from Pyricularia oryzae (strain 70-15 / ATCC MYA-4617 / FGSC 8958) (Rice blast fungus).